Reading from the N-terminus, the 199-residue chain is Recombination protein RecR (199 aa).

The segment at 57–72 (CSICGNITDKDPCYVC) adopts a C4-type zinc-finger fold. In terms of domain architecture, Toprim spans 80–176 (TIVCVVQDSR…RVTRIAHGLP (97 aa)).

It belongs to the RecR family.

May play a role in DNA repair. It seems to be involved in an RecBC-independent recombinational process of DNA repair. It may act with RecF and RecO. The protein is Recombination protein RecR of Exiguobacterium sibiricum (strain DSM 17290 / CCUG 55495 / CIP 109462 / JCM 13490 / 255-15).